The primary structure comprises 142 residues: MAKKITAYIKLQCPAGAAKPSPPVGPALGQHGLNIMEFCKAFNAQTANMEPASPVPVLISVYADRTFSFELKTPPASYFLKKAAGLQGGSKAPNRDPAVGKVTWAQVEEIAKAKMVDLNANDIEAAKKIIAGSANSMGLEVV.

It belongs to the universal ribosomal protein uL11 family. In terms of assembly, part of the ribosomal stalk of the 50S ribosomal subunit. Interacts with L10 and the large rRNA to form the base of the stalk. L10 forms an elongated spine to which L12 dimers bind in a sequential fashion forming a multimeric L10(L12)X complex. One or more lysine residues are methylated.

Its function is as follows. Forms part of the ribosomal stalk which helps the ribosome interact with GTP-bound translation factors. This Magnetococcus marinus (strain ATCC BAA-1437 / JCM 17883 / MC-1) protein is Large ribosomal subunit protein uL11.